Reading from the N-terminus, the 377-residue chain is ATP-dependent (S)-NAD(P)H-hydrate dehydratase (377 aa).

In terms of domain architecture, YjeF C-terminal spans 10-366 (LLHLSRQLIQ…EYLHESFTEL (357 aa)). (6S)-NADPHX is bound by residues glycine 148 and 201-207 (NVVEFQR). Residues 245-249 (KGEHD) and 264-273 (GSNKRVGGQG) each bind ATP. Residue aspartate 274 participates in (6S)-NADPHX binding.

Belongs to the NnrD/CARKD family. It depends on Mg(2+) as a cofactor.

Its subcellular location is the cytoplasm. It carries out the reaction (6S)-NADHX + ATP = ADP + phosphate + NADH + H(+). It catalyses the reaction (6S)-NADPHX + ATP = ADP + phosphate + NADPH + H(+). In terms of biological role, catalyzes the dehydration of the S-form of NAD(P)HX at the expense of ATP, which is converted to ADP. Together with NAD(P)HX epimerase, which catalyzes the epimerization of the S- and R-forms, the enzyme allows the repair of both epimers of NAD(P)HX, a damaged form of NAD(P)H that is a result of enzymatic or heat-dependent hydration. The sequence is that of ATP-dependent (S)-NAD(P)H-hydrate dehydratase from Candida albicans (strain SC5314 / ATCC MYA-2876) (Yeast).